Reading from the N-terminus, the 184-residue chain is Ribosome-recycling factor (184 aa).

This sequence belongs to the RRF family.

It is found in the cytoplasm. Responsible for the release of ribosomes from messenger RNA at the termination of protein biosynthesis. May increase the efficiency of translation by recycling ribosomes from one round of translation to another. The sequence is that of Ribosome-recycling factor from Aster yellows witches'-broom phytoplasma (strain AYWB).